The primary structure comprises 298 residues: uncharacterized protein (298 aa).

This sequence belongs to the NAD(P)-dependent epimerase/dehydratase family.

This is an uncharacterized protein from Saccharomyces cerevisiae (strain ATCC 204508 / S288c) (Baker's yeast).